The chain runs to 569 residues: Probable protein phosphatase 2C BIPP2C1 (569 aa).

Disordered regions lie at residues 120–214 and 251–279; these read EVSP…KVTG and SLDD…GSSI. Basic and acidic residues predominate over residues 179–188; the sequence is ESERGSDADG. The region spanning 329 to 564 is the PPM-type phosphatase domain; that stretch reads AAMLPHPSKV…DDVTVVVSVV (236 aa). Positions 358, 359, 488, and 555 each coordinate Mn(2+).

Belongs to the PP2C family. The cofactor is Mg(2+). Requires Mn(2+) as cofactor.

The catalysed reaction is O-phospho-L-seryl-[protein] + H2O = L-seryl-[protein] + phosphate. The enzyme catalyses O-phospho-L-threonyl-[protein] + H2O = L-threonyl-[protein] + phosphate. May play a role in responses to biotic and abiotic stresses. This Oryza sativa subsp. japonica (Rice) protein is Probable protein phosphatase 2C BIPP2C1 (BIPP2C1).